The sequence spans 88 residues: Sigma-conotoxin GVIIIA (88 aa).

A signal peptide spans 1–20 (MMSKMGAMFVLLLLFTLASS). The propeptide occupies 21 to 46 (LQEGDVQARKTRLKSDFYRALARDDR). Proline 55 bears the 4-hydroxyproline mark. Tryptophan 80 carries the 6'-bromotryptophan modification. Residue serine 87 is modified to Serine amide.

It belongs to the conotoxin S superfamily. Post-translationally, contains 5 disulfide bonds. As to expression, expressed by the venom duct.

The protein localises to the secreted. Its function is as follows. Sigma-conotoxins bind and inhibit serotonin-gated ion channels. This peptide selectively and reversibly inhibits 5-hydroxytryptamine 3 receptor (HTR3A) through competitive antagonism (IC(50)=53-86.8 nM). The polypeptide is Sigma-conotoxin GVIIIA (Conus geographus (Geography cone)).